A 117-amino-acid chain; its full sequence is Protein MGF 110-11L (117 aa).

Residues 3–23 (VFLGLLLGYSTILILTYQSPA) form a helical membrane-spanning segment. A glycan (N-linked (GlcNAc...) asparagine; by host) is linked at N62. 2 helical membrane passes run 69–89 (YYCFYLVFSFAFAGCIAFAIC) and 94–114 (LCTTMKLLMLLSILVLLSQPI).

This sequence belongs to the asfivirus MGF 110 family.

Its subcellular location is the host membrane. Its function is as follows. Plays a role in virus cell tropism, and may be required for efficient virus replication in macrophages. This is Protein MGF 110-11L from African swine fever virus (isolate Warthog/Namibia/Wart80/1980) (ASFV).